We begin with the raw amino-acid sequence, 520 residues long: GMP synthase [glutamine-hydrolyzing] (520 aa).

Residues Lys12 to Asp205 form the Glutamine amidotransferase type-1 domain. Cys89 acts as the Nucleophile in catalysis. Residues His179 and Glu181 contribute to the active site. One can recognise a GMPS ATP-PPase domain in the interval Trp206–Arg395. Ser233–Ser239 provides a ligand contact to ATP.

In terms of assembly, homodimer.

The catalysed reaction is XMP + L-glutamine + ATP + H2O = GMP + L-glutamate + AMP + diphosphate + 2 H(+). Its pathway is purine metabolism; GMP biosynthesis; GMP from XMP (L-Gln route): step 1/1. Its function is as follows. Catalyzes the synthesis of GMP from XMP. This Streptococcus uberis (strain ATCC BAA-854 / 0140J) protein is GMP synthase [glutamine-hydrolyzing].